The following is a 455-amino-acid chain: MNAHGLSTEKAAAFTRRLRAEPQFLLAQNVATCSDPLEVCLQRQVVQDTIQVFQHAVPAEGKPVTNQKNSGRCWIFSCLNAMRLPFMKKYNIEEFEFSQSYLFFWDKVERCYYFLNAFVETAQKKEPIDGRLVQFLLTNPTNDGGQWDMLVNIVEKYGVVPKKYFPESHTTEATRRMNEILNHKMREYCLRLRNMVATGTNKEELCAAMDTMIEEVFRIVSTCLGNPPETFCWEFRDKEKNYHKFGPMTPVQFYNEHVKPYFNMEDKVCLVNDPRPQNPYCQLYTVEYLGNMAGGRKTLYNNQPIEVLKKLAATSIKDGEAVWFGCDVAKHFYSKLGINDLNIFNHELVFGVSVKNMNKAERLIFGDSLMTHAMVLTAVSEKDGQEDCYEKWRVENSWGEDRGNKGYLIMTDDWFSEYVYEVVVDKKYVPEDVLAVMEQEPIVLPAWDPMGALAK.

Active-site residues include Cys73, His372, and Asn396.

It belongs to the peptidase C1 family. In terms of assembly, homooctamer.

It is found in the cytoplasm. It catalyses the reaction Inactivates bleomycin B2 (a cytotoxic glycometallopeptide) by hydrolysis of a carboxyamide bond of beta-aminoalanine, but also shows general aminopeptidase activity. The specificity varies somewhat with source, but amino acid arylamides of Met, Leu and Ala are preferred.. The normal physiological role of BLM hydrolase is unknown, but it catalyzes the inactivation of the antitumor drug BLM (a glycopeptide) by hydrolyzing the carboxamide bond of its B-aminoalaninamide moiety thus protecting normal and malignant cells from BLM toxicity. This chain is Bleomycin hydrolase (BLMH), found in Gallus gallus (Chicken).